The primary structure comprises 401 residues: L-rhamnonate dehydratase (401 aa).

Substrate contacts are provided by His29 and Arg55. Residues Asp222, Glu248, and Glu276 each contribute to the Mg(2+) site. His325 functions as the Proton acceptor in the catalytic mechanism. Substrate is bound at residue Glu345.

Belongs to the mandelate racemase/muconate lactonizing enzyme family. RhamD subfamily. Homooctamer; tetramer of dimers. Mg(2+) is required as a cofactor.

It catalyses the reaction L-rhamnonate = 2-dehydro-3-deoxy-L-rhamnonate + H2O. In terms of biological role, catalyzes the dehydration of L-rhamnonate to 2-keto-3-deoxy-L-rhamnonate (KDR). This Tolumonas auensis (strain DSM 9187 / NBRC 110442 / TA 4) protein is L-rhamnonate dehydratase.